Here is a 389-residue protein sequence, read N- to C-terminus: Lipid-A-disaccharide synthase (389 aa).

This sequence belongs to the LpxB family.

The catalysed reaction is a lipid X + a UDP-2-N,3-O-bis[(3R)-3-hydroxyacyl]-alpha-D-glucosamine = a lipid A disaccharide + UDP + H(+). It functions in the pathway bacterial outer membrane biogenesis; LPS lipid A biosynthesis. Its function is as follows. Condensation of UDP-2,3-diacylglucosamine and 2,3-diacylglucosamine-1-phosphate to form lipid A disaccharide, a precursor of lipid A, a phosphorylated glycolipid that anchors the lipopolysaccharide to the outer membrane of the cell. The polypeptide is Lipid-A-disaccharide synthase (Verminephrobacter eiseniae (strain EF01-2)).